Here is a 208-residue protein sequence, read N- to C-terminus: Small ribosomal subunit protein uS4 (208 aa).

The S4 RNA-binding domain maps to 98-158; it reads GRLDNVVYRM…EKSKKQARIK (61 aa).

The protein belongs to the universal ribosomal protein uS4 family. Part of the 30S ribosomal subunit. Contacts protein S5. The interaction surface between S4 and S5 is involved in control of translational fidelity.

Its function is as follows. One of the primary rRNA binding proteins, it binds directly to 16S rRNA where it nucleates assembly of the body of the 30S subunit. With S5 and S12 plays an important role in translational accuracy. This chain is Small ribosomal subunit protein uS4, found in Haemophilus ducreyi (strain 35000HP / ATCC 700724).